Consider the following 214-residue polypeptide: Avenin (214 aa).

The signal sequence occupies residues Met1–Tyr28. The disordered stretch occupies residues Arg180–Glu214.

Functionally, seed storage protein. The protein is Avenin of Avena sativa (Oat).